Reading from the N-terminus, the 2146-residue chain is Phospholipid-transporting ATPase ABCA7 (2146 aa).

A helical membrane pass occupies residues 22–42 (PVQLLVELLWPLFLFFILVAV). At 43 to 549 (RHSHPPLEHH…DVFLRVLSRS (507 aa)) the chain is on the extracellular side. A disulfide bridge connects residues Cys75 and Cys225. Asn312 is a glycosylation site (N-linked (GlcNAc...) asparagine). The next 6 helical transmembrane spans lie at 550-570 (LPLF…KAVV), 593-613 (LGWF…LVLV), 626-646 (GVVF…SFLL), 655-675 (LAAA…VLCV), 687-707 (VAAS…LALL), and 727-747 (VFSL…YGLA). The 232-residue stretch at 807–1038 (VSVRSLEKRF…LGSGYYLTLV (232 aa)) folds into the ABC transporter 1 domain. 841-848 (GHNGAGKT) is an ATP binding site. A helical membrane pass occupies residues 849–869 (TTLSILSGLFPPSGGSAFILG). A compositionally biased stretch (basic and acidic residues) spans 1048 to 1066 (EKADTDMEGSVDTRQEKKN). 2 disordered regions span residues 1048-1072 (EKAD…QGSR) and 1185-1209 (TALE…DAVG). A helical membrane pass occupies residues 1243–1263 (IVLPALFVGLALVFSLIVPPF). Residues 1264 to 1537 (GHYPALRLSP…ALMASSVDVL (274 aa)) lie on the Extracellular side of the membrane. The cysteines at positions 1345 and 1359 are disulfide-linked. The next 6 membrane-spanning stretches (helical) occupy residues 1538 to 1558 (VSIC…LVLI), 1584 to 1604 (FLWD…IFLA), 1621 to 1641 (LLLL…SFFF), 1649 to 1669 (VVLT…TFVL), 1683 to 1703 (ILKQ…LIDM), and 1729 to 1749 (VVGK…LFTL). The ABC transporter 2 domain occupies 1793–2025 (LVLRNLTKVY…FAAGHTLTLR (233 aa)). 1827-1834 (GVNGAGKT) is a binding site for ATP. Positions 2104–2146 (QGKDEDTEEQKEAGVGVDPAPGLQHPKRVSQFLDDPSTAETVL) are disordered.

This sequence belongs to the ABC transporter superfamily. ABCA family. In terms of processing, N-glycosylated. Expressed in leukocytes (at protein level). Widely expressed. Highly expressed in myelo-lymphatic tissues including peripheral leukocytes, thymus, spleen and bone marrow. Expressed in the hippocampus and the cerebellum. Isoform 2: Abundant in lymph node, spleen, thymus and trachea. Isoform 1: Strongly expressed in brain and bone marrow.

It is found in the cell membrane. It localises to the golgi apparatus membrane. The protein resides in the early endosome membrane. The protein localises to the cytoplasm. Its subcellular location is the cell projection. It is found in the ruffle membrane. It localises to the phagocytic cup. The protein resides in the endoplasmic reticulum. The enzyme catalyses ATP + H2O + phospholipidSide 1 = ADP + phosphate + phospholipidSide 2.. It catalyses the reaction a 1,2-diacyl-sn-glycero-3-phosphocholine(out) + ATP + H2O = a 1,2-diacyl-sn-glycero-3-phosphocholine(in) + ADP + phosphate + H(+). It carries out the reaction a 1,2-diacyl-sn-glycero-3-phospho-L-serine(out) + ATP + H2O = a 1,2-diacyl-sn-glycero-3-phospho-L-serine(in) + ADP + phosphate + H(+). ATPase activity is decreased by cholesterol and ceramide. ATPase activity is stimulated by phosphatidylserine, phosphatidylcholine and sphingomyelin, but phosphatidylserine is more effective. Its function is as follows. Catalyzes the translocation of specific phospholipids from the cytoplasmic to the extracellular/lumenal leaflet of membrane coupled to the hydrolysis of ATP. Transports preferentially phosphatidylserine over phosphatidylcholine. Plays a role in lipid homeostasis and macrophage-mediated phagocytosis. Binds APOA1 and may function in apolipoprotein-mediated phospholipid efflux from cells. May also mediate cholesterol efflux. May regulate cellular ceramide homeostasis during keratinocyte differentiation. Involved in lipid raft organization and CD1D localization on thymocytes and antigen-presenting cells, which plays an important role in natural killer T-cell development and activation. Plays a role in phagocytosis of apoptotic cells by macrophages. Macrophage phagocytosis is stimulated by APOA1 or APOA2, probably by stabilization of ABCA7. Also involved in phagocytic clearance of amyloid-beta by microglia cells and macrophages. Further limits amyloid-beta production by playing a role in the regulation of amyloid-beta A4 precursor protein (APP) endocytosis and/or processing. Amyloid-beta is the main component of amyloid plaques found in the brains of Alzheimer patients. This chain is Phospholipid-transporting ATPase ABCA7, found in Homo sapiens (Human).